A 464-amino-acid polypeptide reads, in one-letter code: ATP-dependent protease ATPase subunit HslU (464 aa).

ATP-binding positions include Ile-19, 61 to 66 (GVGKTE), Asp-277, Glu-342, and Arg-414.

It belongs to the ClpX chaperone family. HslU subfamily. A double ring-shaped homohexamer of HslV is capped on each side by a ring-shaped HslU homohexamer. The assembly of the HslU/HslV complex is dependent on binding of ATP.

Its subcellular location is the cytoplasm. Functionally, ATPase subunit of a proteasome-like degradation complex; this subunit has chaperone activity. The binding of ATP and its subsequent hydrolysis by HslU are essential for unfolding of protein substrates subsequently hydrolyzed by HslV. HslU recognizes the N-terminal part of its protein substrates and unfolds these before they are guided to HslV for hydrolysis. This Lactobacillus johnsonii (strain CNCM I-12250 / La1 / NCC 533) protein is ATP-dependent protease ATPase subunit HslU.